A 72-amino-acid polypeptide reads, in one-letter code: U-poneritoxin(01)-Om7a (72 aa).

The signal sequence occupies residues 1 to 27 (MKPSGLTFAFLVVFMMAIMYNSVQVTA). Residues 28-45 (DADADAEAEALANALAEA) constitute a propeptide that is removed on maturation.

It belongs to the formicidae venom precursor-01 superfamily. As to expression, expressed by the venom gland.

Its subcellular location is the secreted. Functionally, peptide with unknown function that does not resemble any other pilosulin-like peptide and appears to have a coiled coil structure. The chain is U-poneritoxin(01)-Om7a from Odontomachus monticola (Trap-jaw ant).